Here is a 184-residue protein sequence, read N- to C-terminus: Large ribosomal subunit protein uL6 (184 aa).

The protein belongs to the universal ribosomal protein uL6 family. In terms of assembly, part of the 50S ribosomal subunit.

This protein binds to the 23S rRNA, and is important in its secondary structure. It is located near the subunit interface in the base of the L7/L12 stalk, and near the tRNA binding site of the peptidyltransferase center. The sequence is that of Large ribosomal subunit protein uL6 from Desulfitobacterium hafniense (strain Y51).